The following is a 79-amino-acid chain: Small ribosomal subunit protein uS17 (79 aa).

This sequence belongs to the universal ribosomal protein uS17 family. Part of the 30S ribosomal subunit.

One of the primary rRNA binding proteins, it binds specifically to the 5'-end of 16S ribosomal RNA. This is Small ribosomal subunit protein uS17 from Caulobacter vibrioides (strain NA1000 / CB15N) (Caulobacter crescentus).